Here is an 857-residue protein sequence, read N- to C-terminus: Trehalose transporter 1 (857 aa).

Disordered regions lie at residues 1–28 (MSGR…KLKE) and 62–202 (DPFL…QKAT). Over 1–392 (MSGRDNRGAG…VYRPTTNPIY (392 aa)) the chain is Cytoplasmic. Ala-9 carries the phosphothreonine modification. Position 12 is a phosphoserine (Gly-12). Over residues 69–81 (VSPQRHPQNTVRT) the composition is skewed to polar residues. The span at 134-143 (EIREHRDRQQ) shows a compositional bias: basic and acidic residues. The span at 171–181 (GNSNTNSNKAA) shows a compositional bias: polar residues. Phosphoserine is present on residues Ser-248, Ser-249, and Ser-250. 2 disordered regions span residues 249-269 (SSEE…HQSL) and 280-299 (VLQG…EHKR). 2 positions are modified to phosphoserine: Ser-320 and Ser-322. Residues 327 to 346 (LTSRQHFQQQRSISTDSRKS) form a disordered region. Polar residues predominate over residues 330–341 (RQHFQQQRSIST). Residues 393-413 (IWTQVLAALSVSLGSLVVGFV) form a helical membrane-spanning segment. Residues 414-440 (SAYTSPALVSMTDRNITSFEVTQDAGS) lie on the Extracellular side of the membrane. Asn-428 is a glycosylation site (N-linked (GlcNAc...) asparagine). A helical membrane pass occupies residues 441–461 (WVGGIMPLAGLAGGIAGGPLI). The Cytoplasmic portion of the chain corresponds to 462 to 473 (EYLGRRNTILAT). The chain crosses the membrane as a helical span at residues 474–494 (AVPFIVSSLLIACAVNVAMVL). At 495–497 (CGR) the chain is on the extracellular side. A helical transmembrane segment spans residues 498-518 (FLAGFCVGIASLSLPVYLGET). The Cytoplasmic portion of the chain corresponds to 519 to 528 (VQPEVRGTLG). Residues 529–549 (LLPTAFGNIGILLCFVAGSFM) form a helical membrane-spanning segment. N-linked (GlcNAc...) asparagine glycosylation occurs at Asn-550. Residues 550–552 (NWS) lie on the Extracellular side of the membrane. The chain crosses the membrane as a helical span at residues 553–573 (MLAFLGAALPVPFLILMFLIP). Residues 574-636 (ETPRWFVGRG…ELLKLNNLKP (63 aa)) are Cytoplasmic-facing. A helical membrane pass occupies residues 637-657 (LSISLGLMFFQQFSGINAVIF). At 658–673 (YTVQIFKDAGSTIDGN) the chain is on the extracellular side. A helical transmembrane segment spans residues 674–694 (LCTIIVGIVNFLATFIGIVLI). Topologically, residues 695 to 700 (DRAGRK) are cytoplasmic. The helical transmembrane segment at 701–721 (ILLYVSDIAMVLTLFVLGGFF) threads the bilayer. Residues 722–740 (YCKTYGPDVSHLGWLPLTC) lie on the Extracellular side of the membrane. Residues 741–761 (FVIYILGFSLGFGPIPWLMMG) form a helical membrane-spanning segment. At 762-767 (EILPAK) the chain is on the cytoplasmic side. Residues 768-788 (IRGSAASVATAFNWFCTFVVT) form a helical membrane-spanning segment. Topologically, residues 789 to 801 (KTFQDLTVAMGAH) are extracellular. The helical transmembrane segment at 802–822 (GAFWLFGAICFVGLFFVIIYV) threads the bilayer. Residues 823–857 (PETQGKTLEDIERKMMGRVRRMSSVANIKPLSFNM) lie on the Cytoplasmic side of the membrane. 2 positions are modified to phosphoserine: Ser-845 and Ser-846.

It belongs to the major facilitator superfamily. Sugar transporter (TC 2.A.1.1) family. Trehalose transporter subfamily. In terms of tissue distribution, expressed in perineurial glia of the outer layer of the nervous system that forms the blood brain barrier (at protein level). Expressed in the fat body (at protein level). May be specifically expressed in perineurial glia (at protein level). As to expression, may be specifically expressed in the fat body (at protein level).

Its subcellular location is the cell membrane. It localises to the vesicle. It catalyses the reaction alpha,alpha-trehalose(in) = alpha,alpha-trehalose(out). The enzyme catalyses D-glucose(out) = D-glucose(in). In terms of biological role, low-capacity facilitative transporter for trehalose. Can also transport glucose. Does not transport maltose, sucrose, lactose or fructose. Mediates the bidirectional transfer of trehalose. Responsible for the transport of trehalose synthesized in the fat body and the incorporation of trehalose into other tissues that require a carbon source, thereby regulating trehalose levels in the hemolymph. Required in glial cells of the blood brain barrier to fuel glycolysis but not required in neurons. Neurons rely on the citric acid cycle for their energy needs and utilise alanine and lactate, by-products of glial cell glycolysis released into the hemolymph, as fuel. Increased expression in glial cells of the blood brain barrier during starvation and increased cell surface localization enhances carbohydrate uptake to protect the central nervous system from restricted nutrient availability. In Drosophila melanogaster (Fruit fly), this protein is Trehalose transporter 1.